A 296-amino-acid chain; its full sequence is Large ribosomal subunit protein uL18B (296 aa).

The interval 251–296 is disordered; sequence PVHEKKPKKEVKKKRWNRAKLSLEQKKDRVAQKKASFLRAQEKADS. Residues 255–268 show a composition bias toward basic residues; that stretch reads KKPKKEVKKKRWNR. Over residues 271–281 the composition is skewed to basic and acidic residues; that stretch reads LSLEQKKDRVA.

This sequence belongs to the universal ribosomal protein uL18 family. In terms of assembly, component of the large ribosomal subunit (LSU). Part of a LSU subcomplex, the 5S RNP which is composed of the 5S RNA, RPL5 and RPL11.

It localises to the cytoplasm. The protein resides in the nucleus. The protein localises to the nucleolus. In terms of biological role, component of the ribosome, a large ribonucleoprotein complex responsible for the synthesis of proteins in the cell. The small ribosomal subunit (SSU) binds messenger RNAs (mRNAs) and translates the encoded message by selecting cognate aminoacyl-transfer RNA (tRNA) molecules. The large subunit (LSU) contains the ribosomal catalytic site termed the peptidyl transferase center (PTC), which catalyzes the formation of peptide bonds, thereby polymerizing the amino acids delivered by tRNAs into a polypeptide chain. The nascent polypeptides leave the ribosome through a tunnel in the LSU and interact with protein factors that function in enzymatic processing, targeting, and the membrane insertion of nascent chains at the exit of the ribosomal tunnel. As part of the 5S RNP/5S ribonucleoprotein particle it is an essential component of the LSU, required for its formation and the maturation of rRNAs. It also couples ribosome biogenesis to p53/TP53 activation. As part of the 5S RNP it accumulates in the nucleoplasm and inhibits MDM2, when ribosome biogenesis is perturbed, mediating the stabilization and the activation of TP53. The protein is Large ribosomal subunit protein uL18B (rpl5-b) of Xenopus laevis (African clawed frog).